A 104-amino-acid chain; its full sequence is NADH-quinone oxidoreductase subunit K (104 aa).

Transmembrane regions (helical) follow at residues 7–27 (LSHY…GIFL), 33–53 (IVIL…LVSF), and 67–87 (LLVL…LVVF).

It belongs to the complex I subunit 4L family. As to quaternary structure, NDH-1 is composed of 14 different subunits. Subunits NuoA, H, J, K, L, M, N constitute the membrane sector of the complex.

It localises to the cell inner membrane. It catalyses the reaction a quinone + NADH + 5 H(+)(in) = a quinol + NAD(+) + 4 H(+)(out). In terms of biological role, NDH-1 shuttles electrons from NADH, via FMN and iron-sulfur (Fe-S) centers, to quinones in the respiratory chain. The immediate electron acceptor for the enzyme in this species is believed to be ubiquinone. Couples the redox reaction to proton translocation (for every two electrons transferred, four hydrogen ions are translocated across the cytoplasmic membrane), and thus conserves the redox energy in a proton gradient. This is NADH-quinone oxidoreductase subunit K from Xanthobacter autotrophicus (strain ATCC BAA-1158 / Py2).